Reading from the N-terminus, the 378-residue chain is tRNA-specific 2-thiouridylase MnmA (378 aa).

ATP contacts are provided by residues 9-16 and Met35; that span reads GVSGGVDS. The interaction with target base in tRNA stretch occupies residues 94-96; the sequence is NPD. Cys99 serves as the catalytic Nucleophile. A disulfide bridge connects residues Cys99 and Cys195. Gly123 is an ATP binding site. An interaction with tRNA region spans residues 145-147; it reads KDQ. The active-site Cysteine persulfide intermediate is Cys195. The interaction with tRNA stretch occupies residues 307 to 308; that stretch reads RY.

The protein belongs to the MnmA/TRMU family.

Its subcellular location is the cytoplasm. It catalyses the reaction S-sulfanyl-L-cysteinyl-[protein] + uridine(34) in tRNA + AH2 + ATP = 2-thiouridine(34) in tRNA + L-cysteinyl-[protein] + A + AMP + diphosphate + H(+). Its function is as follows. Catalyzes the 2-thiolation of uridine at the wobble position (U34) of tRNA, leading to the formation of s(2)U34. The sequence is that of tRNA-specific 2-thiouridylase MnmA from Xanthomonas oryzae pv. oryzae (strain PXO99A).